Consider the following 185-residue polypeptide: uncharacterized protein (185 aa).

A run of 5 helical transmembrane segments spans residues 4–24 (IAWMIVFCEIAFWVVIVLGLA), 35–55 (GLLFLALTPVIDLILLAATGV), 60–80 (GASATAAHGIAAVYIGISIAY), 123–143 (VLAYLIGAGLLAGMIYFINDS), and 152–172 (ILKLWTVIIGIDFLITASYFI).

Its subcellular location is the cell membrane. This is an uncharacterized protein from Bacillus subtilis (strain 168).